The following is a 389-amino-acid chain: Epidermis-specific secreted glycoprotein EP1 (389 aa).

Residues 1-24 (MARFFPLTLTILLFFIQRIDFCHT) form the signal peptide. Asparagine 29 carries N-linked (GlcNAc...) (complex) asparagine glycosylation. Residues 88 to 193 (MRWVWEANRG…ASPGENVNGP (106 aa)) form the Bulb-type lectin domain. Residues asparagine 103, asparagine 230, and asparagine 235 are each glycosylated (N-linked (GlcNAc...) asparagine). Residue asparagine 274 is glycosylated (N-linked (GlcNAc...) (high mannose) asparagine).

In terms of tissue distribution, in 14-day old seedlings, expressed in the epidermis and apical dome of the shoot and in the hypocotyl, cotyledon and epidermis of the root. In developing seeds, expressed in both the inner and outer epidermis of the integument.

The protein resides in the secreted. May be involved in the limitation of water flow through the outer epidermal cell wall, either by direct modification of wall structure or as a signal instructing the protoplast to restrict water transport across the cell wall. The sequence is that of Epidermis-specific secreted glycoprotein EP1 (EP1) from Daucus carota (Wild carrot).